We begin with the raw amino-acid sequence, 450 residues long: Tubulin alpha-3E chain (450 aa).

The MREC motif signature appears at 1–4 (MREC). Gln11 provides a ligand contact to GTP. N6-acetyllysine is present on Lys40. Residues Glu71, Ser140, Gly144, Thr145, Thr179, Asn206, and Asn228 each contribute to the GTP site. Glu71 contacts Mg(2+). Glu254 is a catalytic residue. The residue at position 282 (Tyr282) is a 3'-nitrotyrosine. Residue Ser439 is modified to Phosphoserine. Residue Tyr450 is modified to 3'-nitrotyrosine.

It belongs to the tubulin family. As to quaternary structure, dimer of alpha and beta chains. A typical microtubule is a hollow water-filled tube with an outer diameter of 25 nm and an inner diameter of 15 nM. Alpha-beta heterodimers associate head-to-tail to form protofilaments running lengthwise along the microtubule wall with the beta-tubulin subunit facing the microtubule plus end conferring a structural polarity. Microtubules usually have 13 protofilaments but different protofilament numbers can be found in some organisms and specialized cells. Requires Mg(2+) as cofactor. In terms of processing, some glutamate residues at the C-terminus are polyglutamylated, resulting in polyglutamate chains on the gamma-carboxyl group. Polyglutamylation plays a key role in microtubule severing by spastin (SPAST). SPAST preferentially recognizes and acts on microtubules decorated with short polyglutamate tails: severing activity by SPAST increases as the number of glutamates per tubulin rises from one to eight, but decreases beyond this glutamylation threshold. Glutamylation is also involved in cilia motility. Some glutamate residues at the C-terminus are monoglycylated but not polyglycylated due to the absence of functional TTLL10 in human. Monoglycylation is mainly limited to tubulin incorporated into cilia and flagella axonemes, which is required for their stability and maintenance. Flagella glycylation controls sperm motility. Both polyglutamylation and monoglycylation can coexist on the same protein on adjacent residues, and lowering glycylation levels increases polyglutamylation, and reciprocally. Post-translationally, acetylation of alpha chains at Lys-40 is located inside the microtubule lumen. This modification has been correlated with increased microtubule stability, intracellular transport and ciliary assembly. In terms of processing, methylation of alpha chains at Lys-40 is found in mitotic microtubules and is required for normal mitosis and cytokinesis contributing to genomic stability. Nitration of Tyr-450 is irreversible and interferes with normal dynein intracellular distribution. Post-translationally, undergoes a tyrosination/detyrosination cycle, the cyclic removal and re-addition of a C-terminal tyrosine residue by the enzymes tubulin tyrosine carboxypeptidase (MATCAP1/KIAA0895L, VASH1 or VASH2) and tubulin tyrosine ligase (TTL), respectively. In terms of processing, tyrosination promotes microtubule interaction with CAP-Gly domain-containing proteins such as CLIP1, CLIP2 and DCTN1. Tyrosination regulates the initiation of dynein-dynactin motility via interaction with DCTN1, which brings the dynein-dynactin complex into contact with microtubules. In neurons, tyrosinated tubulins mediate the initiation of retrograde vesicle transport. Detyrosination is involved in metaphase plate congression by guiding chromosomes during mitosis: detyrosination promotes interaction with CENPE, promoting pole-proximal transport of chromosomes toward the equator. Detyrosination increases microtubules-dependent mechanotransduction in dystrophic cardiac and skeletal muscle. In cardiomyocytes, detyrosinated microtubules are required to resist to contractile compression during contraction: detyrosination promotes association with desmin (DES) at force-generating sarcomeres, leading to buckled microtubules and mechanical resistance to contraction.

The protein resides in the cytoplasm. Its subcellular location is the cytoskeleton. The catalysed reaction is GTP + H2O = GDP + phosphate + H(+). Its function is as follows. Tubulin is the major constituent of microtubules, a cylinder consisting of laterally associated linear protofilaments composed of alpha- and beta-tubulin heterodimers. Microtubules grow by the addition of GTP-tubulin dimers to the microtubule end, where a stabilizing cap forms. Below the cap, tubulin dimers are in GDP-bound state, owing to GTPase activity of alpha-tubulin. This Homo sapiens (Human) protein is Tubulin alpha-3E chain (TUBA3E).